Reading from the N-terminus, the 517-residue chain is Ribonuclease Y (517 aa).

A helical transmembrane segment spans residues E2–I22. The 61-residue stretch at T207–L267 folds into the KH domain. An HD domain is found at V333 to S426.

Belongs to the RNase Y family.

It localises to the cell membrane. Functionally, endoribonuclease that initiates mRNA decay. The chain is Ribonuclease Y from Petrotoga mobilis (strain DSM 10674 / SJ95).